A 457-amino-acid polypeptide reads, in one-letter code: Bifunctional protein GlmU (457 aa).

The tract at residues 1–229 is pyrophosphorylase; the sequence is MYNCAIILAA…YEEIMGVNSR (229 aa). UDP-N-acetyl-alpha-D-glucosamine is bound by residues 8-11, K22, Q73, and 78-79; these read LAAG and GT. D103 contacts Mg(2+). UDP-N-acetyl-alpha-D-glucosamine is bound by residues G140, E155, N170, and N227. Residue N227 coordinates Mg(2+). Residues 230-250 are linker; the sequence is VQLSEAEIVMRKRINHKHMVN. Positions 251–457 are N-acetyltransferase; the sequence is GVTFIDCEST…WLDKKGLLKK (207 aa). Residues R332 and K350 each coordinate UDP-N-acetyl-alpha-D-glucosamine. Residue H362 is the Proton acceptor of the active site. 2 residues coordinate UDP-N-acetyl-alpha-D-glucosamine: Y365 and N376. Acetyl-CoA-binding positions include 385-386, A422, and R439; that span reads NY.

This sequence in the N-terminal section; belongs to the N-acetylglucosamine-1-phosphate uridyltransferase family. It in the C-terminal section; belongs to the transferase hexapeptide repeat family. As to quaternary structure, homotrimer. It depends on Mg(2+) as a cofactor.

Its subcellular location is the cytoplasm. It catalyses the reaction alpha-D-glucosamine 1-phosphate + acetyl-CoA = N-acetyl-alpha-D-glucosamine 1-phosphate + CoA + H(+). The catalysed reaction is N-acetyl-alpha-D-glucosamine 1-phosphate + UTP + H(+) = UDP-N-acetyl-alpha-D-glucosamine + diphosphate. It participates in nucleotide-sugar biosynthesis; UDP-N-acetyl-alpha-D-glucosamine biosynthesis; N-acetyl-alpha-D-glucosamine 1-phosphate from alpha-D-glucosamine 6-phosphate (route II): step 2/2. The protein operates within nucleotide-sugar biosynthesis; UDP-N-acetyl-alpha-D-glucosamine biosynthesis; UDP-N-acetyl-alpha-D-glucosamine from N-acetyl-alpha-D-glucosamine 1-phosphate: step 1/1. It functions in the pathway bacterial outer membrane biogenesis; LPS lipid A biosynthesis. In terms of biological role, catalyzes the last two sequential reactions in the de novo biosynthetic pathway for UDP-N-acetylglucosamine (UDP-GlcNAc). The C-terminal domain catalyzes the transfer of acetyl group from acetyl coenzyme A to glucosamine-1-phosphate (GlcN-1-P) to produce N-acetylglucosamine-1-phosphate (GlcNAc-1-P), which is converted into UDP-GlcNAc by the transfer of uridine 5-monophosphate (from uridine 5-triphosphate), a reaction catalyzed by the N-terminal domain. This is Bifunctional protein GlmU from Clostridium botulinum (strain Langeland / NCTC 10281 / Type F).